Reading from the N-terminus, the 88-residue chain is MANTNSAKKMVRKIARRTAVNKARRSRVRTFVKKVEMAITSGDQAAAKTALVEAESELMRAVGKGVYHKNTGSRKVSRLSARVKSMSA.

It belongs to the bacterial ribosomal protein bS20 family.

In terms of biological role, binds directly to 16S ribosomal RNA. In Maricaulis maris (strain MCS10) (Caulobacter maris), this protein is Small ribosomal subunit protein bS20.